Here is a 452-residue protein sequence, read N- to C-terminus: MQRRIMGIETEFGVTCTFHGHRRLSPDEVARYLFRRVVSWGRSSNVFLRNGARLYLDVGSHPEYATAECDSLIQLVTHDRAGERVLEDLLIDAEQRLADEGIGGDIYLFKNNTDSAGNSYGCHENYLIVRAGEFSRISDVLLPFLVTRQLICGAGKVLQTPKAATFCLSQRAEHIWEGVSSATTRSRPIINTRDEPHADAEKYRRLHVIVGDSNMSESTTMLKVGSASLVLEMIEAGVAFRDFSLDNPIRAIREVSHDLTGRRPVRLAGGRQASALDIQREYYARAVEYLQSREPNTQIEQVVDLWGRQLDAVESQDFAKVDTEIDWVIKRKLFQRYQDRYNMELSDPKISQLDLAYHDIKRGRGVFDLLQRKGLAARITTDEEIEAAVNTPPQTTRAKLRGEFISAAQEAGRDFTVDWVHLKLNDQAQRTVLCKDPFRSVDERVKRLIASM.

Residue Glu9 coordinates Mg(2+). Arg53 contributes to the ATP binding site. A Mg(2+)-binding site is contributed by Tyr55. Asp57 functions as the Proton acceptor in the catalytic mechanism. A Mg(2+)-binding site is contributed by Glu63. ATP-binding residues include Thr66 and Trp419.

It belongs to the Pup ligase/Pup deamidase family. Pup-conjugating enzyme subfamily.

It catalyses the reaction ATP + [prokaryotic ubiquitin-like protein]-L-glutamate + [protein]-L-lysine = ADP + phosphate + N(6)-([prokaryotic ubiquitin-like protein]-gamma-L-glutamyl)-[protein]-L-lysine.. It functions in the pathway protein degradation; proteasomal Pup-dependent pathway. Its pathway is protein modification; protein pupylation. Functionally, catalyzes the covalent attachment of the prokaryotic ubiquitin-like protein modifier Pup to the proteasomal substrate proteins, thereby targeting them for proteasomal degradation. This tagging system is termed pupylation. The ligation reaction involves the side-chain carboxylate of the C-terminal glutamate of Pup and the side-chain amino group of a substrate lysine. This is Pup--protein ligase from Mycolicibacterium gilvum (strain PYR-GCK) (Mycobacterium gilvum (strain PYR-GCK)).